Reading from the N-terminus, the 291-residue chain is START domain-containing protein 10 (291 aa).

The residue at position 1 (M1) is an N-acetylmethionine. Positions 1–23 (MEKPAASTEPQGSRPALGRESVQ) are disordered. The START domain occupies 14–224 (RPALGRESVQ…MYKACIKYPE (211 aa)). 3 positions are modified to N6-succinyllysine: K94, K197, and K202. Residues S253, S259, S284, and S289 each carry the phosphoserine modification. A disordered region spans residues 260 to 291 (LENIDESAVTESREERAGGAGGEGSDDDTSLT).

Phosphorylation at Ser-284 by CK2 negatively regulates lipid transfer activity, possibly by decreasing membrane association. As to expression, testis, kidney, liver, and intestine with the highest level in the testis.

It is found in the cell projection. Its subcellular location is the cilium. It localises to the flagellum. The protein localises to the cytoplasm. The protein resides in the membrane. Functionally, phospholipid transfer protein that preferentially selects lipid species containing a palmitoyl or stearoyl chain on the sn-1 and an unsaturated fatty acyl chain (18:1 or 18:2) on the sn-2 position. Able to transfer phosphatidylcholine (PC) and phosphatidyetanolamline (PE) between membranes. May play metabolic roles in sperm maturation or fertilization. In Mus musculus (Mouse), this protein is START domain-containing protein 10 (Stard10).